A 235-amino-acid polypeptide reads, in one-letter code: Large ribosomal subunit protein uL1 (235 aa).

This sequence belongs to the universal ribosomal protein uL1 family. In terms of assembly, part of the 50S ribosomal subunit.

In terms of biological role, binds directly to 23S rRNA. The L1 stalk is quite mobile in the ribosome, and is involved in E site tRNA release. Functionally, protein L1 is also a translational repressor protein, it controls the translation of the L11 operon by binding to its mRNA. This Mycobacteroides abscessus (strain ATCC 19977 / DSM 44196 / CCUG 20993 / CIP 104536 / JCM 13569 / NCTC 13031 / TMC 1543 / L948) (Mycobacterium abscessus) protein is Large ribosomal subunit protein uL1.